A 418-amino-acid polypeptide reads, in one-letter code: Putative ion-transport protein YfeO (418 aa).

The next 12 membrane-spanning stretches (helical) occupy residues 10 to 30 (LLLSLPAVAIGIASSLILIVV), 54 to 74 (DSPFWIIAILTLTGIAVGLVI), 99 to 119 (ALPGLIVALILGLAGGVSLGP), 120 to 140 (EHPIMTVNIALAVAIGARLLP), 149 to 169 (ILASAGTIGALFGTPVAAALI), 186 to 206 (LFAPLMAAAAGALTTGLFFHP), 223 to 243 (ILSGAIVAAIAIAAGMVAVWC), 258 to 278 (VLMLGVGGFILGILGVIAGPV), 300 to 320 (DYFLLAVIKLAALVVAAASGF), 322 to 342 (GGRIFPAVFVGVALGLMLHEH), 343 to 363 (VPAVPAAITVSCAILGIVLVV), and 386 to 406 (LLCIVMLPAWLLLAGKPIMMV).

Belongs to the chloride channel (TC 2.A.49) family.

Its subcellular location is the cell membrane. The protein is Putative ion-transport protein YfeO of Escherichia fergusonii (strain ATCC 35469 / DSM 13698 / CCUG 18766 / IAM 14443 / JCM 21226 / LMG 7866 / NBRC 102419 / NCTC 12128 / CDC 0568-73).